A 386-amino-acid polypeptide reads, in one-letter code: Succinate--CoA ligase [ADP-forming] subunit beta (386 aa).

Residues 9-244 form the ATP-grasp domain; sequence KELLREFGVA…TTEEDPREVE (236 aa). ATP is bound by residues Lys-46, 53–55, Glu-99, Ser-102, and Glu-107; that span reads GRG. Mg(2+)-binding residues include Asn-199 and Asp-213. Residues Asn-264 and 321–323 contribute to the substrate site; that span reads GIM.

This sequence belongs to the succinate/malate CoA ligase beta subunit family. In terms of assembly, heterotetramer of two alpha and two beta subunits. It depends on Mg(2+) as a cofactor.

It carries out the reaction succinate + ATP + CoA = succinyl-CoA + ADP + phosphate. The catalysed reaction is GTP + succinate + CoA = succinyl-CoA + GDP + phosphate. The protein operates within carbohydrate metabolism; tricarboxylic acid cycle; succinate from succinyl-CoA (ligase route): step 1/1. Its function is as follows. Succinyl-CoA synthetase functions in the citric acid cycle (TCA), coupling the hydrolysis of succinyl-CoA to the synthesis of either ATP or GTP and thus represents the only step of substrate-level phosphorylation in the TCA. The beta subunit provides nucleotide specificity of the enzyme and binds the substrate succinate, while the binding sites for coenzyme A and phosphate are found in the alpha subunit. This Exiguobacterium sp. (strain ATCC BAA-1283 / AT1b) protein is Succinate--CoA ligase [ADP-forming] subunit beta.